A 348-amino-acid polypeptide reads, in one-letter code: Erythronate-4-phosphate dehydrogenase (348 aa).

Substrate-binding residues include Thr-46 and Thr-67. Asp-147 provides a ligand contact to NAD(+). The active site involves Arg-209. Residue Asp-233 participates in NAD(+) binding. Glu-238 is a catalytic residue. The Proton donor role is filled by His-255. Gly-258 is an NAD(+) binding site. Tyr-259 is a binding site for substrate.

This sequence belongs to the D-isomer specific 2-hydroxyacid dehydrogenase family. PdxB subfamily. In terms of assembly, homodimer.

The protein localises to the cytoplasm. It catalyses the reaction 4-phospho-D-erythronate + NAD(+) = (R)-3-hydroxy-2-oxo-4-phosphooxybutanoate + NADH + H(+). The protein operates within cofactor biosynthesis; pyridoxine 5'-phosphate biosynthesis; pyridoxine 5'-phosphate from D-erythrose 4-phosphate: step 2/5. In terms of biological role, catalyzes the oxidation of erythronate-4-phosphate to 3-hydroxy-2-oxo-4-phosphonooxybutanoate. The chain is Erythronate-4-phosphate dehydrogenase from Bacteroides thetaiotaomicron (strain ATCC 29148 / DSM 2079 / JCM 5827 / CCUG 10774 / NCTC 10582 / VPI-5482 / E50).